The following is a 374-amino-acid chain: Putative glutamate--cysteine ligase 2 (374 aa).

Belongs to the glutamate--cysteine ligase type 2 family. YbdK subfamily.

It catalyses the reaction L-cysteine + L-glutamate + ATP = gamma-L-glutamyl-L-cysteine + ADP + phosphate + H(+). Its function is as follows. ATP-dependent carboxylate-amine ligase which exhibits weak glutamate--cysteine ligase activity. The polypeptide is Putative glutamate--cysteine ligase 2 (Acidovorax ebreus (strain TPSY) (Diaphorobacter sp. (strain TPSY))).